A 162-amino-acid chain; its full sequence is Large ribosomal subunit protein uL15 (162 aa).

The segment covering 1-10 has biased composition (basic and acidic residues); that stretch reads MNLNELRDNA. The interval 1–39 is disordered; the sequence is MNLNELRDNAGSRYRKKRLGRGIGSGKGKTSGKGVKGQK. Gly residues predominate over residues 21–35; it reads RGIGSGKGKTSGKGV.

The protein belongs to the universal ribosomal protein uL15 family. Part of the 50S ribosomal subunit.

In terms of biological role, binds to the 23S rRNA. This chain is Large ribosomal subunit protein uL15, found in Gluconacetobacter diazotrophicus (strain ATCC 49037 / DSM 5601 / CCUG 37298 / CIP 103539 / LMG 7603 / PAl5).